The chain runs to 353 residues: Melatonin receptor type 1A (353 aa).

The span at 1 to 15 (MKGNGSTLLNASQQA) shows a compositional bias: polar residues. The interval 1–23 (MKGNGSTLLNASQQAPGVGEGGG) is disordered. The Extracellular segment spans residues 1–32 (MKGNGSTLLNASQQAPGVGEGGGPRPSWLAST). N-linked (GlcNAc...) asparagine glycosylation is found at Asn-4 and Asn-10. The chain crosses the membrane as a helical span at residues 33–53 (LAFILIFTIVVDILGNLLVIL). Topologically, residues 54 to 66 (SVYRNKKLRNAGN) are cytoplasmic. Residues 67–87 (IFVVSLAIADLVVAIYPYPLV) traverse the membrane as a helical segment. At 88 to 105 (LTSIFNNGWNLGYLHCQI) the chain is on the extracellular side. The cysteines at positions 103 and 180 are disulfide-linked. A helical membrane pass occupies residues 106-126 (SAFLMGLSVIGSIFNITGIAI). Residues 127–147 (NRYCYICHSLKYDRLYSNKNS) lie on the Cytoplasmic side of the membrane. A helical transmembrane segment spans residues 148–168 (LCYVFLIWVLTLVAIMPNLQT). Topologically, residues 169 to 190 (GTLQYDPRIYSCTFTQSVSSAY) are extracellular. The chain crosses the membrane as a helical span at residues 191 to 211 (TIAVVVFHFIVPMIIVIFCYL). Topologically, residues 212-243 (RIWILVLQVRRRVKPDSKPRLKPQDFRNFVTM) are cytoplasmic. A helical transmembrane segment spans residues 244 to 264 (FVVFVLFAICWAPLNFIGLIV). The Extracellular portion of the chain corresponds to 265–277 (ASDPATMAPRIPE). The chain crosses the membrane as a helical span at residues 278 to 298 (WLFVASYYMAYFNSCLNAIIY). Residues 299-353 (GLLNQNFRQEYKRILVSLFTAKMCFVDSSNDPADKIKCKPAPLIANNNLIKVDSV) lie on the Cytoplasmic side of the membrane.

The protein belongs to the G-protein coupled receptor 1 family. In terms of tissue distribution, at least in the brain, more precisely in the pars tuberalis and the suprachiasmatic nucleus.

The protein resides in the cell membrane. In terms of biological role, high affinity receptor for melatonin. Likely to mediate the reproductive and circadian actions of melatonin. The activity of this receptor is mediated by pertussis toxin sensitive G proteins that inhibit adenylate cyclase activity. Possibly involved in sleep induction, by melatonin activation of the potassium channel KCNMA1/BK and the dissociation of G-beta and G-gamma subunits, thereby decreasing synaptic transmission. The protein is Melatonin receptor type 1A (MTNR1A) of Phodopus sungorus (Striped hairy-footed hamster).